The following is a 498-amino-acid chain: ATP synthase subunit beta, chloroplastic (498 aa).

Polar residues predominate over residues 1-14 (MRTNPTTSRPGVST). A disordered region spans residues 1-20 (MRTNPTTSRPGVSTSEEKST). An ATP-binding site is contributed by 172 to 179 (GGAGVGKT).

The protein belongs to the ATPase alpha/beta chains family. As to quaternary structure, F-type ATPases have 2 components, CF(1) - the catalytic core - and CF(0) - the membrane proton channel. CF(1) has five subunits: alpha(3), beta(3), gamma(1), delta(1), epsilon(1). CF(0) has four main subunits: a(1), b(1), b'(1) and c(9-12).

It localises to the plastid. The protein localises to the chloroplast thylakoid membrane. The catalysed reaction is ATP + H2O + 4 H(+)(in) = ADP + phosphate + 5 H(+)(out). Produces ATP from ADP in the presence of a proton gradient across the membrane. The catalytic sites are hosted primarily by the beta subunits. The sequence is that of ATP synthase subunit beta, chloroplastic from Hordeum vulgare (Barley).